Reading from the N-terminus, the 113-residue chain is Large ribosomal subunit protein uL22 (113 aa).

This sequence belongs to the universal ribosomal protein uL22 family. Part of the 50S ribosomal subunit.

Its function is as follows. This protein binds specifically to 23S rRNA; its binding is stimulated by other ribosomal proteins, e.g. L4, L17, and L20. It is important during the early stages of 50S assembly. It makes multiple contacts with different domains of the 23S rRNA in the assembled 50S subunit and ribosome. In terms of biological role, the globular domain of the protein is located near the polypeptide exit tunnel on the outside of the subunit, while an extended beta-hairpin is found that lines the wall of the exit tunnel in the center of the 70S ribosome. The polypeptide is Large ribosomal subunit protein uL22 (Thermus thermophilus (strain ATCC BAA-163 / DSM 7039 / HB27)).